The sequence spans 342 residues: Putative TPR repeat-containing protein R856 (342 aa).

TPR repeat units lie at residues valine 36–glycine 69, phenylalanine 77–methionine 110, valine 119–leucine 152, alanine 161–lysine 194, alanine 203–isoleucine 236, alanine 245–valine 278, and alanine 291–threonine 324.

This is Putative TPR repeat-containing protein R856 from Acanthamoeba polyphaga mimivirus (APMV).